Consider the following 280-residue polypeptide: uncharacterized protein (280 aa).

The N-terminal stretch at 1–21 (MRPVIKVGLSTASVYPLRAEA) is a signal peptide.

This sequence to M.tuberculosis Rv0498 and S.coelicolor SCO3347.

This is an uncharacterized protein from Mycobacterium leprae (strain TN).